The chain runs to 323 residues: Estradiol 17 beta-dehydrogenase 5 (323 aa).

NADP(+) is bound by residues 20–24 and Asp-50; that span reads GFGTY. The active-site Proton donor is the Tyr-55. His-117 contacts substrate. Residues 166–167, Gln-190, 216–221, and 270–280 contribute to the NADP(+) site; these read SN, YSALGS, and KSFSEKRIKEN.

The protein belongs to the aldo/keto reductase family. As to quaternary structure, monomer. Three forms are detected, probably due to post-translational modifications. As to expression, mainly found in liver. Also expressed weakly in kidney.

In terms of biological role, active toward androgens, estrogens, and xenobiotic substrates. Also exhibits low 20 alpha-HSD activity. Shows a-stereospecificity in hydrogen transfer between cofactors and substrates (A-specific). Preferentially catalyzes the reduction of 4-androstenedione, 5-alpha-androstane-3,17-dione, androsterone and dehydroepiandrosterone to testosterone, dihydrotestosterone, 5-alpha-androstane-3-alpha,17-beta-diol and 5-androstene-3-beta,17-beta-diol, respectively. In Mus musculus (Mouse), this protein is Estradiol 17 beta-dehydrogenase 5 (Akr1c6).